A 512-amino-acid polypeptide reads, in one-letter code: D-alanine--D-alanyl carrier protein ligase (512 aa).

152 to 153 is a binding site for ATP; that stretch reads TS. Residue Asp-199 participates in D-alanine binding. 294–299 is an ATP binding site; it reads NAYGPT. Val-303 is a D-alanine binding site. ATP is bound by residues Asp-385, 397-400, and Lys-499; that span reads YGGR. D-alanine is bound at residue Lys-499.

The protein belongs to the ATP-dependent AMP-binding enzyme family. DltA subfamily.

The protein resides in the cytoplasm. It catalyses the reaction holo-[D-alanyl-carrier protein] + D-alanine + ATP = D-alanyl-[D-alanyl-carrier protein] + AMP + diphosphate. The protein operates within cell wall biogenesis; lipoteichoic acid biosynthesis. In terms of biological role, catalyzes the first step in the D-alanylation of lipoteichoic acid (LTA), the activation of D-alanine and its transfer onto the D-alanyl carrier protein (Dcp) DltC. In an ATP-dependent two-step reaction, forms a high energy D-alanyl-AMP intermediate, followed by transfer of the D-alanyl residue as a thiol ester to the phosphopantheinyl prosthetic group of the Dcp. D-alanylation of LTA plays an important role in modulating the properties of the cell wall in Gram-positive bacteria, influencing the net charge of the cell wall. The sequence is that of D-alanine--D-alanyl carrier protein ligase from Streptococcus pyogenes serotype M1.